A 760-amino-acid polypeptide reads, in one-letter code: H(+)/Cl(-) exchange transporter 4 (760 aa).

The Cytoplasmic portion of the chain corresponds to 1 to 67; that stretch reads MVNAGAMSGS…WEFIKSLLDA (67 aa). Positions 14-63 are required for localization in the endoplasmic reticulum; the sequence is MDFLDEPFPDVGTYEDFHTIDWLREKSRDTDRHRKITSKSKESIWEFIKS. Helical transmembrane passes span 68–105 and 151–174; these read WSGW…VCLS and LNYL…VRVF. The Selectivity filter part_1 signature appears at 180–184; it reads GSGIP. S181 is a binding site for chloride. Positions 183–190 form an intramembrane region, helical; that stretch reads IPEIKTIL. Helical transmembrane passes span 200 to 218 and 224 to 243; these read GKWT…VSSG and EGPL…SLFS. The Selectivity filter part_2 motif lies at 222 to 226; that stretch reads GKEGP. 2 consecutive intramembrane regions (helical) follow at residues 255 to 267 and 271 to 279; these read VLSA…VSVA and PIGGVLFSL. 5 helical membrane passes run 291–309, 333–358, 365–385, 442–462, and 467–486; these read LWRS…RSIN, FPFI…AWCR, LGKY…IIAY, MWQL…TFGM, and GLFI…VGIG. Residues 467–471 carry the Selectivity filter part_3 motif; it reads GLFIP. A chloride-binding site is contributed by F469. Intramembrane regions (helical) lie at residues 514-528 and 532-543; these read GLYA…LGGV and TVSLVVIMFELT. An intramembrane region (note=Loop between two helices) is located at residues 544-547; that stretch reads GGLE. Residues 548-566 traverse the membrane as a helical segment; that stretch reads YIVPLMAAAVTSKWVADAF. Topologically, residues 567–760 are cytoplasmic; it reads GKEGIYEAHI…NQDPESIMFN (194 aa). Y572 is a chloride binding site. The CBS 1 domain occupies 600 to 666; the sequence is MRPRRGEPPL…AIKNARQRQE (67 aa). ATP-binding positions include S610 and 631-633; that span reads YNG. A required for localization in the endoplasmic reticulum region spans residues 667–696; the sequence is GIVSNSIMYFTEEPPELPANSPHPLKLRRI. The region spanning 697–755 is the CBS 2 domain; sequence LNLSPFTVTDHTPMETVVDIFRKLGLRQCLVTRSGRLLGIITKKDVLRHMAQMANQDPE. 738–741 serves as a coordination point for ATP; it reads TKKD.

The protein belongs to the chloride channel (TC 2.A.49) family. ClC-4/CLCN4 subfamily. In terms of assembly, monomer. Forms heterodimers with CLCN3. In terms of tissue distribution, abundant in skeletal muscle and also detectable in brain and heart.

Its subcellular location is the early endosome membrane. It localises to the late endosome membrane. The protein localises to the endoplasmic reticulum membrane. It is found in the lysosome membrane. The protein resides in the recycling endosome membrane. Strongly outwardly rectifying, electrogenic H(+)/Cl(-)exchanger which mediates the exchange of chloride ions against protons. The CLC channel family contains both chloride channels and proton-coupled anion transporters that exchange chloride or another anion for protons. The presence of conserved gating glutamate residues is typical for family members that function as antiporters. This Homo sapiens (Human) protein is H(+)/Cl(-) exchange transporter 4 (CLCN4).